Consider the following 348-residue polypeptide: Protein pelota homolog (348 aa).

The protein belongs to the eukaryotic release factor 1 family. Pelota subfamily. As to quaternary structure, monomer. A divalent metal cation is required as a cofactor.

The protein localises to the cytoplasm. Functionally, may function in recognizing stalled ribosomes, interact with stem-loop structures in stalled mRNA molecules, and effect endonucleolytic cleavage of the mRNA. May play a role in the release non-functional ribosomes and degradation of damaged mRNAs. Has endoribonuclease activity. This is Protein pelota homolog from Methanococcus maripaludis (strain C7 / ATCC BAA-1331).